Reading from the N-terminus, the 251-residue chain is MKLTKLLSALLVIGLVLGGCKSKKDSNDIVAPIATLYNEGIILLDKKKYKKAAEEFGKIFYQHPGNEMTPQAELMQAYSLFLAAQYEEAVDILNMFINLHPANIDIAYAYYLKALSYYMLISDVNHDQSRTFLSKDSFEDVITKFPNTKYAIDSSLKIDLVNDHLAGKEMMIGRFYLKKKNPMAAINRFEEVIDNYQTTYHSVEALYRLVESYMMLGLHDEAKKYTSVLGYNYPNSKWYSYAYRLVKNYQN.

A signal peptide spans 1–19 (MKLTKLLSALLVIGLVLGG). Cysteine 20 carries the N-palmitoyl cysteine lipid modification. Residue cysteine 20 is the site of S-diacylglycerol cysteine attachment. 3 TPR repeats span residues 33–66 (IATL…HPGN), 70–103 (PQAE…HPAN), and 166–199 (AGKE…YQTT).

Belongs to the BamD family. Part of the Bam complex.

It is found in the cell outer membrane. Part of the outer membrane protein assembly complex, which is involved in assembly and insertion of beta-barrel proteins into the outer membrane. The polypeptide is Outer membrane protein assembly factor BamD (Rickettsia prowazekii (strain Madrid E)).